The chain runs to 438 residues: Transposon Ty2-LR2 Gag polyprotein (438 aa).

Polar residues-rich tracts occupy residues 1-11, 19-39, and 49-60; these read MESQQLHQNPH, ASVT…SASN, and KVNSQEETTPGT. 3 disordered regions span residues 1 to 88, 364 to 397, and 418 to 438; these read MESQ…YQQH, KNVS…AKAH, and VSSQ…TERI. The RNA-binding stretch occupies residues 295–397; that stretch reads ENNINVSDRL…SSKPRAAKAH (103 aa). Over residues 369-381 the composition is skewed to low complexity; it reads TSPNTTNTKVTTR.

Homotrimer.

The protein resides in the cytoplasm. Capsid protein (CA) is the structural component of the virus-like particle (VLP), forming the shell that encapsulates the retrotransposons dimeric RNA genome. The particles are assembled from trimer-clustered units and there are holes in the capsid shells that allow for the diffusion of macromolecules. CA also has nucleocapsid-like chaperone activity, promoting primer tRNA(i)-Met annealing to the multipartite primer-binding site (PBS), dimerization of Ty2 RNA and initiation of reverse transcription. This is Transposon Ty2-LR2 Gag polyprotein (TY2A-LR2) from Saccharomyces cerevisiae (strain ATCC 204508 / S288c) (Baker's yeast).